The primary structure comprises 268 residues: Hydroxyethylthiazole kinase (268 aa).

Residue Met45 participates in substrate binding. Arg121 and Thr167 together coordinate ATP. A substrate-binding site is contributed by Gly194.

The protein belongs to the Thz kinase family. Mg(2+) is required as a cofactor.

The catalysed reaction is 5-(2-hydroxyethyl)-4-methylthiazole + ATP = 4-methyl-5-(2-phosphooxyethyl)-thiazole + ADP + H(+). It functions in the pathway cofactor biosynthesis; thiamine diphosphate biosynthesis; 4-methyl-5-(2-phosphoethyl)-thiazole from 5-(2-hydroxyethyl)-4-methylthiazole: step 1/1. Catalyzes the phosphorylation of the hydroxyl group of 4-methyl-5-beta-hydroxyethylthiazole (THZ). The polypeptide is Hydroxyethylthiazole kinase (Bacillus cereus (strain ATCC 10987 / NRS 248)).